Reading from the N-terminus, the 277-residue chain is Putative phosphoenolpyruvate synthase regulatory protein (277 aa).

ADP is bound at residue 157–164 (GVSRSGKT).

The protein belongs to the pyruvate, phosphate/water dikinase regulatory protein family. PSRP subfamily.

The enzyme catalyses [pyruvate, water dikinase] + ADP = [pyruvate, water dikinase]-phosphate + AMP + H(+). It carries out the reaction [pyruvate, water dikinase]-phosphate + phosphate + H(+) = [pyruvate, water dikinase] + diphosphate. Functionally, bifunctional serine/threonine kinase and phosphorylase involved in the regulation of the phosphoenolpyruvate synthase (PEPS) by catalyzing its phosphorylation/dephosphorylation. The sequence is that of Putative phosphoenolpyruvate synthase regulatory protein from Aromatoleum aromaticum (strain DSM 19018 / LMG 30748 / EbN1) (Azoarcus sp. (strain EbN1)).